The sequence spans 20 residues: 7.2 kDa cytotoxin RVV-7 (20 aa).

In terms of assembly, monomer. Homodimerizes during storage at 30 degrees Celsius (observed after 3 days). In terms of tissue distribution, expressed by the venom gland.

The protein resides in the secreted. The protein localises to the target cell membrane. Its function is as follows. This three-finger cytotoxin shows cytotoxicity and direct nephrotoxicity. The cytotoxicity has been observed on B16F10 melanoma cells (EC(50)=2.56 uM) and on kidney proximal tubular epithelium LLCPK1 cells (EC(50)=4.79 uM); it is due to necrotic cell death and not to apoptosis. Direct nephrotoxicity has been deduced from binding to LLCPK1 cell line and to kidney membranes. In addition, after intravenous injection into mice tail vein, the toxin principally accumulates in kidney, but only minimally in blood, liver and brain. This chain is 7.2 kDa cytotoxin RVV-7, found in Daboia russelii (Russel's viper).